The sequence spans 76 residues: Exodeoxyribonuclease 7 small subunit (76 aa).

This sequence belongs to the XseB family. As to quaternary structure, heterooligomer composed of large and small subunits.

The protein resides in the cytoplasm. It catalyses the reaction Exonucleolytic cleavage in either 5'- to 3'- or 3'- to 5'-direction to yield nucleoside 5'-phosphates.. In terms of biological role, bidirectionally degrades single-stranded DNA into large acid-insoluble oligonucleotides, which are then degraded further into small acid-soluble oligonucleotides. This chain is Exodeoxyribonuclease 7 small subunit, found in Staphylococcus epidermidis (strain ATCC 35984 / DSM 28319 / BCRC 17069 / CCUG 31568 / BM 3577 / RP62A).